Consider the following 20-residue polypeptide: Ribulose bisphosphate carboxylase small subunit (20 aa).

Belongs to the RuBisCO small chain family. Heterohexadecamer of 8 large and 8 small subunits.

The protein localises to the plastid. It is found in the chloroplast. RuBisCO catalyzes two reactions: the carboxylation of D-ribulose 1,5-bisphosphate, the primary event in carbon dioxide fixation, as well as the oxidative fragmentation of the pentose substrate in the photorespiration process. Both reactions occur simultaneously and in competition at the same active site. Although the small subunit is not catalytic it is essential for maximal activity. This chain is Ribulose bisphosphate carboxylase small subunit, found in Chattonella marina var. antiqua (Red tide flagellate).